The following is a 324-amino-acid chain: PGR5-like protein 1A, chloroplastic (324 aa).

A chloroplast-targeting transit peptide spans 1 to 60; it reads MGSKMLFSLTSPRLFSAVSRKPSSSFSPSPPSPSSRTQWTQLSPGKSISLRRRVFLLPAK. A disordered region spans residues 16-42; the sequence is SAVSRKPSSSFSPSPPSPSSRTQWTQL. At 61-198 the chain is on the stromal side; the sequence is ATTEQSGPVG…KVYSDLAVDY (138 aa). A disulfide bridge connects residues Cys-82 and Cys-183. Residues 199–219 form a helical membrane-spanning segment; the sequence is FKMLLLNVPATVVALGLFFFL. At 220–236 the chain is on the lumenal, thylakoid side; that stretch reads DDITGFEITYIMELPEP. Residues 237–257 traverse the membrane as a helical segment; that stretch reads YSFIFTWFAAVPVIVYLALSI. Residues 258–324 lie on the Stromal side of the membrane; that stretch reads TKLIIKDFLI…LITLPEGSQA (67 aa).

The protein belongs to the PGR5 family. Homodimer and heterodimer with PGR5. Interacts with PGR5, FD2, petC, psaD1, LFNR1 and LFNR2. Also interacts with a Fe-containing cofactor (FCC). In terms of processing, disulfide bonds; Cys-300 and Cys-303 are probably involved in the formation of disulfide bridges with 'Cys-11' and 'Cys-105' of PGR5 while Cys-272 and Cys-275 are probably involved in the binding of a Fe-containing cofactor (FCC).

It is found in the plastid. The protein resides in the chloroplast thylakoid membrane. Inhibited by antimycin A. Its function is as follows. Ferredoxin-plastoquinone reductase involved in cyclic electron flow (CEF) around photosystem I. The homodimer is probably not involved in CEF. This is PGR5-like protein 1A, chloroplastic (PGRL1A) from Arabidopsis thaliana (Mouse-ear cress).